Here is a 427-residue protein sequence, read N- to C-terminus: Enolase (427 aa).

Residue glutamine 163 coordinates (2R)-2-phosphoglycerate. Residue glutamate 205 is the Proton donor of the active site. The Mg(2+) site is built by aspartate 242, glutamate 285, and aspartate 312. Residues lysine 337, arginine 366, serine 367, and lysine 388 each contribute to the (2R)-2-phosphoglycerate site. Catalysis depends on lysine 337, which acts as the Proton acceptor.

It belongs to the enolase family. Requires Mg(2+) as cofactor.

It is found in the cytoplasm. The protein resides in the secreted. Its subcellular location is the cell surface. It carries out the reaction (2R)-2-phosphoglycerate = phosphoenolpyruvate + H2O. The protein operates within carbohydrate degradation; glycolysis; pyruvate from D-glyceraldehyde 3-phosphate: step 4/5. In terms of biological role, catalyzes the reversible conversion of 2-phosphoglycerate (2-PG) into phosphoenolpyruvate (PEP). It is essential for the degradation of carbohydrates via glycolysis. The polypeptide is Enolase (Paraburkholderia xenovorans (strain LB400)).